A 390-amino-acid chain; its full sequence is Homeobox protein Meis1 (390 aa).

Positions 108 to 191 constitute an MEIS N-terminal domain; sequence GGDVCSSESF…PIDLVIDDRD (84 aa). Positions 188-202 are enriched in basic and acidic residues; sequence DDRDGGSKSDSEDLT. The interval 188–279 is disordered; it reads DDRDGGSKSD…KKRNKGRGIF (92 aa). The homeobox; TALE-type DNA-binding region spans 272–334; sequence RNKGRGIFPK…NARRRIVQPM (63 aa). The interval 299 to 329 is interaction with DNA; sequence YPSEEQKKQLAQDTGLTILQVNNWFINARRR.

Belongs to the TALE/MEIS homeobox family. In terms of assembly, interacts with pbx1 isoform b. As to expression, in the embryo, displays a broad expression pattern with high levels observed in tissues of neural cell fate such as midbrain, hindbrain, dorsal portion of the neural tube, and neural crest-derived branchial arches. Widely expressed in the adult with highest levels in brain and spleen.

The protein resides in the cytoplasm. The protein localises to the nucleus. In terms of biological role, induces expression of a number of neural crest marker genes as part of a heterodimer with isoform b of pbx1, to specify neural crest cell fate. Binds to a highly conserved region in the promoter of the neural crest marker gene zic3. The polypeptide is Homeobox protein Meis1 (meis1) (Xenopus laevis (African clawed frog)).